A 440-amino-acid polypeptide reads, in one-letter code: Tuliposide B-converting enzyme 1, amyloplastic (440 aa).

An amyloplast-targeting transit peptide spans methionine 1 to proline 58. Serine 232 (acyl-ester intermediate) is an active-site residue. Catalysis depends on charge relay system residues aspartate 325 and histidine 357.

The protein belongs to the AB hydrolase superfamily. Homodimer. Not glycosylated. Expressed in the pollen grains.

It localises to the plastid. The protein resides in the amyloplast. The catalysed reaction is 6-tuliposide B = tulipalin B + D-glucose. Its activity is regulated as follows. Inhibited by Ag(+), Cu(2+), Fe(2+), Hg(2+), V(3+) and phenylmethylsulfonyl fluoride (PMSF). Lactone-forming carboxylesterase, specifically catalyzing intramolecular transesterification, but not hydrolysis. Involved in the biosynthesis of tulipalins, defensive chemicals that show antimicrobial activities against a broad range of strains of bacteria and fungi. Substrates are 6-tuliposide B &gt; 6-tuliposide A. This is Tuliposide B-converting enzyme 1, amyloplastic from Tulipa gesneriana (Garden tulip).